The chain runs to 154 residues: Large ribosomal subunit protein uL13 (154 aa).

The protein belongs to the universal ribosomal protein uL13 family. Part of the 50S ribosomal subunit.

In terms of biological role, this protein is one of the early assembly proteins of the 50S ribosomal subunit, although it is not seen to bind rRNA by itself. It is important during the early stages of 50S assembly. This is Large ribosomal subunit protein uL13 from Sinorhizobium medicae (strain WSM419) (Ensifer medicae).